A 578-amino-acid polypeptide reads, in one-letter code: Thrombomodulin (578 aa).

The N-terminal stretch at methionine 1–glycine 16 is a signal peptide. Residues leucine 17–serine 518 are Extracellular-facing. One can recognise a C-type lectin domain in the interval methionine 31–cysteine 167. Asparagine 114 carries N-linked (GlcNAc...) asparagine glycosylation. 19 cysteine pairs are disulfide-bonded: cysteine 137/cysteine 158, cysteine 246/cysteine 257, cysteine 253/cysteine 266, cysteine 268/cysteine 281, cysteine 289/cysteine 297, cysteine 293/cysteine 309, cysteine 311/cysteine 324, cysteine 330/cysteine 341, cysteine 337/cysteine 350, cysteine 352/cysteine 363, cysteine 370/cysteine 379, cysteine 375/cysteine 389, cysteine 391/cysteine 405, cysteine 409/cysteine 414, cysteine 418/cysteine 426, cysteine 428/cysteine 440, cysteine 446/cysteine 455, cysteine 451/cysteine 464, and cysteine 466/cysteine 480. EGF-like domains lie at glycine 242 to alanine 282 and alanine 285 to glutamate 325. An N-linked (GlcNAc...) asparagine glycan is attached at asparagine 300. The region spanning aspartate 326–valine 364 is the EGF-like 3; calcium-binding domain. At asparagine 343 the chain carries (3R)-3-hydroxyasparagine. EGF-like domains follow at residues proline 366–glutamine 406 and cysteine 405–threonine 441. An N-linked (GlcNAc...) asparagine glycan is attached at asparagine 410. The region spanning aspartate 442 to glycine 481 is the EGF-like 6; calcium-binding domain. The disordered stretch occupies residues isoleucine 483–proline 512. Serine 493 and serine 495 each carry an O-linked (Xyl...) (chondroitin sulfate) serine glycan. Residues proline 499–proline 512 show a composition bias toward pro residues. The chain crosses the membrane as a helical span at residues glycine 519–leucine 539. Over cysteine 540–leucine 578 the chain is Cytoplasmic.

Interacts with ITGAL, ITGAM and ITGB2. Interacts with thrombin/F2; this interaction switches the specificity of thrombin from a procoagulant to an anticoagulant and antifibrinolytic protease. Interacts with ANGP1 and ANGP2; these interactions significantly inhibit the generation of activated PC and TAFIa/CPB2 by the thrombin/thrombomodulin complex. Interacts with PF4; this interaction enhances generation of activated protein C. Interacts with HMGB1; this interaction inhibits HMGB1 inflammatory activity. In terms of processing, N-glycosylated. The iron and 2-oxoglutarate dependent 3-hydroxylation of aspartate and asparagine is (R) stereospecific within EGF domains. In terms of tissue distribution, expressed in lung, liver, spleen, kidney, pancreas and lymph node. Low expression in heart, cerebrum, urinary bladder and uterus.

It is found in the membrane. Endothelial cell receptor that plays a critical role in regulating several physiological processes including hemostasis, coagulation, fibrinolysis, inflammation, and angiogenesis. Acts as a cofactor for thrombin activation of protein C/PROC on the surface of vascular endothelial cells leading to initiation of the activated protein C anticoagulant pathway. Also accelerates the activation of the plasma carboxypeptidase B2/CPB2, which catalyzes removal of C-terminal basic amino acids from its substrates including kinins or anaphylatoxins leading to fibrinolysis inhibition. Plays critical protective roles in changing the cleavage specificity of protease-activated receptor 1/PAR1, inhibiting endothelial cell permeability and inflammation. Suppresses inflammation distinctly from its anticoagulant cofactor activity by sequestering HMGB1 thereby preventing it from engaging cellular receptors such as RAGE and contributing to the inflammatory response. The sequence is that of Thrombomodulin (THBD) from Canis lupus familiaris (Dog).